The following is a 223-amino-acid chain: Cytidylate kinase (223 aa).

11–19 lines the ATP pocket; sequence GPAGVGKST.

It belongs to the cytidylate kinase family. Type 1 subfamily.

Its subcellular location is the cytoplasm. It carries out the reaction CMP + ATP = CDP + ADP. The catalysed reaction is dCMP + ATP = dCDP + ADP. The chain is Cytidylate kinase from Maridesulfovibrio salexigens (strain ATCC 14822 / DSM 2638 / NCIMB 8403 / VKM B-1763) (Desulfovibrio salexigens).